A 66-amino-acid polypeptide reads, in one-letter code: Regulator of G-protein signaling 11 (66 aa).

The 66-residue stretch at 1-66 folds into the RGS domain; sequence EACEELRFGG…DAAQLHIYML (66 aa).

As to quaternary structure, heterodimer with Gbeta5. Interacts with RGS7BP, leading to regulate the subcellular location of the heterodimer formed with Gbeta5.

Its function is as follows. Inhibits signal transduction by increasing the GTPase activity of G protein alpha subunits thereby driving them into their inactive GDP-bound form. The chain is Regulator of G-protein signaling 11 (Rgs11) from Rattus norvegicus (Rat).